We begin with the raw amino-acid sequence, 432 residues long: Adenylosuccinate synthetase (432 aa).

Residues 13–19 and 41–43 contribute to the GTP site; these read GDEGKGK and GHT. The active-site Proton acceptor is Asp-14. Asp-14 and Gly-41 together coordinate Mg(2+). Residues 14–17, 39–42, Thr-131, Arg-145, Gln-226, Thr-241, and Arg-305 each bind IMP; these read DEGK and NAGH. The active-site Proton donor is the His-42. Substrate is bound at residue 301 to 307; that stretch reads SVTGRAR. GTP contacts are provided by residues Arg-307, 333 to 335, and 416 to 418; these read KLD and STG.

Belongs to the adenylosuccinate synthetase family. As to quaternary structure, homodimer. It depends on Mg(2+) as a cofactor.

It is found in the cytoplasm. It catalyses the reaction IMP + L-aspartate + GTP = N(6)-(1,2-dicarboxyethyl)-AMP + GDP + phosphate + 2 H(+). Its pathway is purine metabolism; AMP biosynthesis via de novo pathway; AMP from IMP: step 1/2. In terms of biological role, plays an important role in the de novo pathway of purine nucleotide biosynthesis. Catalyzes the first committed step in the biosynthesis of AMP from IMP. The protein is Adenylosuccinate synthetase of Neisseria gonorrhoeae (strain ATCC 700825 / FA 1090).